We begin with the raw amino-acid sequence, 137 residues long: Small ribosomal subunit protein uS9 (137 aa).

Residues 106-117 are compositionally biased toward basic and acidic residues; the sequence is KTEGYLTRDPRA. The disordered stretch occupies residues 106-137; it reads KTEGYLTRDPRAKERRKYGLRKARKAPQYSKR. Over residues 118 to 137 the composition is skewed to basic residues; sequence KERRKYGLRKARKAPQYSKR.

This sequence belongs to the universal ribosomal protein uS9 family.

This Thermosynechococcus vestitus (strain NIES-2133 / IAM M-273 / BP-1) protein is Small ribosomal subunit protein uS9.